Here is a 452-residue protein sequence, read N- to C-terminus: uncharacterized protein (452 aa).

The TRAM domain occupies 3 to 61 (KVKIGEKYEVDITSMGHEGEGVGRIDGIAVFVKGALKGERVIVEIEEVHKNYLKGYTVK). [4Fe-4S] cluster contacts are provided by cysteine 74, cysteine 80, cysteine 83, and cysteine 160. The S-adenosyl-L-methionine site is built by glutamine 284, tyrosine 313, glutamate 334, and aspartate 382. Cysteine 409 (nucleophile) is an active-site residue.

The protein belongs to the class I-like SAM-binding methyltransferase superfamily. RNA M5U methyltransferase family.

This is an uncharacterized protein from Caldanaerobacter subterraneus subsp. tengcongensis (strain DSM 15242 / JCM 11007 / NBRC 100824 / MB4) (Thermoanaerobacter tengcongensis).